An 89-amino-acid polypeptide reads, in one-letter code: Small ribosomal subunit protein uS15 (89 aa).

Belongs to the universal ribosomal protein uS15 family. In terms of assembly, part of the 30S ribosomal subunit. Forms a bridge to the 50S subunit in the 70S ribosome, contacting the 23S rRNA.

Functionally, one of the primary rRNA binding proteins, it binds directly to 16S rRNA where it helps nucleate assembly of the platform of the 30S subunit by binding and bridging several RNA helices of the 16S rRNA. In terms of biological role, forms an intersubunit bridge (bridge B4) with the 23S rRNA of the 50S subunit in the ribosome. The polypeptide is Small ribosomal subunit protein uS15 (Pediococcus pentosaceus (strain ATCC 25745 / CCUG 21536 / LMG 10740 / 183-1w)).